Consider the following 262-residue polypeptide: MHFEVHGLDRPDAKTIILSSGLGGSGSYWAPQIEALATDFRIVTYDHRGTGRTGGDVPDTGGISAMADDVLEIAARLQLDRFDFMGHALGGLIGLDIALRRPELIGKLILINAWSKADPHSGRCFDIRIELLERSGVEAFVKAQPLFLYPAVWMSENAERMAADERHGVAHFQGKANVLKRIAALRAFDIDDRLSEIRTPTLVVGTRDDLLVPYTRSVRLAEGLSAAELALSDFGAHAVNVVEPEEFNNKVLRFLRARSEVR.

Belongs to the AB hydrolase superfamily. Hydrolase RutD family.

It catalyses the reaction carbamate + 2 H(+) = NH4(+) + CO2. Its function is as follows. Involved in pyrimidine catabolism. May facilitate the hydrolysis of carbamate, a reaction that can also occur spontaneously. The polypeptide is Putative carbamate hydrolase RutD (Rhizobium rhizogenes (strain K84 / ATCC BAA-868) (Agrobacterium radiobacter)).